Here is a 1077-residue protein sequence, read N- to C-terminus: Teashirt homolog 1-B (1077 aa).

Disordered stretches follow at residues 1–110 and 142–179; these read MPRR…NASY and NEKA…SCTN. Over residues 26–36 the composition is skewed to acidic residues; sequence TEEDNLEDDGL. Positions 56-69 are enriched in polar residues; it reads TQSYQNSPISSATN. A compositionally biased stretch (low complexity) spans 160–179; that stretch reads SGPTSDPGTPTTITSSSCTN. The segment at 248–272 adopts a C2H2-type 1 zinc-finger fold; it reads FRCKDCSAAYDTLVELTVHMNETGH. A compositionally biased stretch (basic and acidic residues) spans 274–286; sequence RDDNRDREAERTK. A disordered region spans residues 274–300; sequence RDDNRDREAERTKRWSKPRKRSLMEME. The segment at 309-333 adopts a C2H2-type 2 zinc-finger fold; that stretch reads LKCMYCGHSFESLQDLSVHMIKTKH. A disordered region spans residues 362–394; sequence ALPDSPEQAGISPGASVSESAKDPKAANPYVTP. The C2H2-type 3 zinc-finger motif lies at 418-442; sequence LKCMECGSSHDTLQQLTAHMMVTGH. Disordered stretches follow at residues 473–530 and 849–873; these read PPTT…KIEP and GRLT…SSFE. Basic and acidic residues predominate over residues 497–529; it reads HSEEKKDPEKEKVNIGEVEKKIKEENEDPEKIE. Polar residues predominate over residues 853–862; the sequence is PKSSTPSTVS. Positions 885 to 955 form a DNA-binding region, homeobox; the sequence is RKGRQSNWNP…NVKYQLRRTG (71 aa). C2H2-type zinc fingers lie at residues 970-992 and 1037-1060; these read FFCN…LETH and FQCK…SKTH.

The protein belongs to the teashirt C2H2-type zinc-finger protein family.

The protein resides in the nucleus. In terms of biological role, probable transcriptional regulator involved in developmental processes. May act as a transcriptional repressor (Potential). Involved in two major neuronal regionalization processes: primary anteroposterior (AP) axis patterning of the CNS and segmentation of the cranial neuronal crest (CNS) development. The protein is Teashirt homolog 1-B (tshz1-b) of Xenopus laevis (African clawed frog).